Consider the following 48-residue polypeptide: Large ribosomal subunit protein bL32 (48 aa).

The span at 1 to 20 (MAVPKRRVSKTRAAKRRTHY) shows a compositional bias: basic residues. The interval 1–48 (MAVPKRRVSKTRAAKRRTHYKVSLPMPVKDKDGSYKMPHRANPTTKEY) is disordered.

Belongs to the bacterial ribosomal protein bL32 family.

This chain is Large ribosomal subunit protein bL32, found in Campylobacter jejuni subsp. doylei (strain ATCC BAA-1458 / RM4099 / 269.97).